Reading from the N-terminus, the 140-residue chain is MSKRGRGGASGAKFRISLGLPVGAVMNCADNTGAKNLFVISVYGIRGRLNRLPSAGVGDMFVCSVKKGKPELRKKVLQGVVIRQRKQFRRKDGTFIYFEDNAGVIVNNKGEMKGSAITGPVAKECADLWPRIAANAGSIA.

This sequence belongs to the universal ribosomal protein uL14 family.

The chain is Large ribosomal subunit protein uL14 (rpl-23) from Caenorhabditis elegans.